The chain runs to 180 residues: Large ribosomal subunit protein uL5 (180 aa).

This sequence belongs to the universal ribosomal protein uL5 family. Part of the 50S ribosomal subunit; part of the 5S rRNA/L5/L18/L25 subcomplex. Contacts the 5S rRNA and the P site tRNA. Forms a bridge to the 30S subunit in the 70S ribosome.

Functionally, this is one of the proteins that bind and probably mediate the attachment of the 5S RNA into the large ribosomal subunit, where it forms part of the central protuberance. In the 70S ribosome it contacts protein S13 of the 30S subunit (bridge B1b), connecting the 2 subunits; this bridge is implicated in subunit movement. Contacts the P site tRNA; the 5S rRNA and some of its associated proteins might help stabilize positioning of ribosome-bound tRNAs. The sequence is that of Large ribosomal subunit protein uL5 from Rubrobacter xylanophilus (strain DSM 9941 / JCM 11954 / NBRC 16129 / PRD-1).